The primary structure comprises 197 residues: Imidazoleglycerol-phosphate dehydratase (197 aa).

The protein belongs to the imidazoleglycerol-phosphate dehydratase family.

Its subcellular location is the cytoplasm. It catalyses the reaction D-erythro-1-(imidazol-4-yl)glycerol 3-phosphate = 3-(imidazol-4-yl)-2-oxopropyl phosphate + H2O. The protein operates within amino-acid biosynthesis; L-histidine biosynthesis; L-histidine from 5-phospho-alpha-D-ribose 1-diphosphate: step 6/9. The sequence is that of Imidazoleglycerol-phosphate dehydratase from Syntrophobacter fumaroxidans (strain DSM 10017 / MPOB).